The primary structure comprises 332 residues: Ferredoxin--NADP reductase 2 (332 aa).

FAD is bound by residues E37, Q45, Y50, V90, F124, D285, and T326.

This sequence belongs to the ferredoxin--NADP reductase type 2 family. Homodimer. FAD serves as cofactor.

The catalysed reaction is 2 reduced [2Fe-2S]-[ferredoxin] + NADP(+) + H(+) = 2 oxidized [2Fe-2S]-[ferredoxin] + NADPH. The sequence is that of Ferredoxin--NADP reductase 2 from Bacillus pumilus (strain SAFR-032).